A 448-amino-acid chain; its full sequence is Na(+)-malate symporter (448 aa).

A run of 11 helical transmembrane segments spans residues 31–51, 60–80, 86–106, 123–143, 153–173, 182–202, 214–234, 276–293, 297–319, 333–353, and 359–379; these read IGVIPLPLYTVLAVIIILAAY, LGGFAIIMILGVFLGDIGQRI, IGGPAILSLFVPSFLVFYNVL, FLYFYIACLVVGSILGMNRIV, VPLVAGTIAAVAAGILVGFIF, FFVVVPIIAGGIGEGILPLSI, VFVSQLVPAAIIGNVFAIICA, LMGAGVLLACTFFIFGGL, FIFIPGAILMIISAAAVKYANIL, FISSSFTWPLMVGLGILFIPL, and VISIPFVIICISVVIAMIGSG.

It belongs to the 2-hydroxycarboxylate transporter (2-HCT) (TC 2.A.24) family.

It localises to the cell membrane. Acts as a Na(+)-malate symporter, as it catalyzes malate-dependent uptake of Na(+) and Na(+)-dependent uptake of malate. The polypeptide is Na(+)-malate symporter (Bacillus subtilis (strain 168)).